A 262-amino-acid chain; its full sequence is uncharacterized protein (262 aa).

Positions 6–70 (LRINQFLAHY…LKNKKFSVLV (65 aa)) constitute an S4 RNA-binding domain. Catalysis depends on D108, which acts as the Nucleophile.

This sequence belongs to the pseudouridine synthase RsuA family.

It catalyses the reaction a uridine in RNA = a pseudouridine in RNA. This is an uncharacterized protein from Helicobacter pylori (strain ATCC 700392 / 26695) (Campylobacter pylori).